The chain runs to 421 residues: UDP-N-acetylglucosamine 1-carboxyvinyltransferase (421 aa).

Position 22-23 (Lys-22–Asn-23) interacts with phosphoenolpyruvate. Arg-93 is a binding site for UDP-N-acetyl-alpha-D-glucosamine. Cys-117 acts as the Proton donor in catalysis. A 2-(S-cysteinyl)pyruvic acid O-phosphothioketal modification is found at Cys-117. UDP-N-acetyl-alpha-D-glucosamine-binding positions include Arg-122 to Leu-126, Asp-308, and Ile-330.

The protein belongs to the EPSP synthase family. MurA subfamily.

It is found in the cytoplasm. The enzyme catalyses phosphoenolpyruvate + UDP-N-acetyl-alpha-D-glucosamine = UDP-N-acetyl-3-O-(1-carboxyvinyl)-alpha-D-glucosamine + phosphate. It participates in cell wall biogenesis; peptidoglycan biosynthesis. Its function is as follows. Cell wall formation. Adds enolpyruvyl to UDP-N-acetylglucosamine. In Pseudomonas fluorescens (strain ATCC BAA-477 / NRRL B-23932 / Pf-5), this protein is UDP-N-acetylglucosamine 1-carboxyvinyltransferase.